The following is a 354-amino-acid chain: Deubiquitination-protection protein dph1 (354 aa).

The Ubiquitin-like domain maps to 1 to 78 (MTNISLTIKA…SIHLVKTLGQ (78 aa)). Residues 309-353 (PPEERYAEQLSQLNEMGFVDFERNVQALRRSGGNVQGAIESLLSD) form the UBA domain.

In terms of biological role, protects ubiquitin chains against dissambly by deubiquitinating enzymes thereby promoting protein degradation. In Schizosaccharomyces pombe (strain 972 / ATCC 24843) (Fission yeast), this protein is Deubiquitination-protection protein dph1 (dph1).